We begin with the raw amino-acid sequence, 358 residues long: Aromatic amino acid aminotransferase (358 aa).

The residue at position 219 (Lys-219) is an N6-(pyridoxal phosphate)lysine.

The protein belongs to the class-II pyridoxal-phosphate-dependent aminotransferase family. As to quaternary structure, homodimer. The cofactor is pyridoxal 5'-phosphate.

The catalysed reaction is an aromatic L-alpha-amino acid + 2-oxoglutarate = an aromatic oxo-acid + L-glutamate. Its function is as follows. Aminotransferase that catalyzes the conversion of aromatic amino acids and 2-oxoglutarate into corresponding aromatic oxo acids and L-glutamate. The chain is Aromatic amino acid aminotransferase from Nocardia farcinica (strain IFM 10152).